The sequence spans 569 residues: 3-(3-hydroxy-phenyl)propionate/3-hydroxycinnamic acid hydroxylase (569 aa).

FAD is bound by residues aspartate 12–glutamate 41 and phenylalanine 277–aspartate 287.

The protein belongs to the PheA/TfdB FAD monooxygenase family. FAD is required as a cofactor.

It catalyses the reaction 3-(3-hydroxyphenyl)propanoate + NADH + O2 + H(+) = 3-(2,3-dihydroxyphenyl)propanoate + NAD(+) + H2O. The enzyme catalyses (2E)-3-(3-hydroxyphenyl)prop-2-enoate + NADH + O2 + H(+) = (2E)-3-(2,3-dihydroxyphenyl)prop-2-enoate + NAD(+) + H2O. The protein operates within aromatic compound metabolism; 3-phenylpropanoate degradation. In terms of biological role, catalyzes the insertion of one atom of molecular oxygen into position 2 of the phenyl ring of 3-(3-hydroxyphenyl)propionate (3-HPP) and hydroxycinnamic acid (3HCI). The sequence is that of 3-(3-hydroxy-phenyl)propionate/3-hydroxycinnamic acid hydroxylase from Mycolicibacterium vanbaalenii (strain DSM 7251 / JCM 13017 / BCRC 16820 / KCTC 9966 / NRRL B-24157 / PYR-1) (Mycobacterium vanbaalenii).